Reading from the N-terminus, the 526-residue chain is Protein mono-ADP-ribosyltransferase PARP3 (526 aa).

Residues 1–55 are disordered; the sequence is MAPKRRAPPASQPADGGKKAKGGQEEEEDAWSSALNALKTAPREKPPATIDGQCP. Positions 61–151 constitute a WGR domain; the sequence is DAKVYEDYDC…DNFVAQPGKY (91 aa). Positions 183-301 constitute a PARP alpha-helical domain; that stretch reads PCALDETTQK…DIEVAQSLQA (119 aa). A PARP catalytic domain is found at 312 to 526; the sequence is HPLDRDYALL…RIRYLVQLHF (215 aa).

This sequence belongs to the ARTD/PARP family.

Its subcellular location is the nucleus. It is found in the chromosome. The protein resides in the cytoplasm. It localises to the cytoskeleton. The protein localises to the microtubule organizing center. Its subcellular location is the centrosome. It is found in the centriole. It carries out the reaction L-aspartyl-[protein] + NAD(+) = 4-O-(ADP-D-ribosyl)-L-aspartyl-[protein] + nicotinamide. The catalysed reaction is L-glutamyl-[protein] + NAD(+) = 5-O-(ADP-D-ribosyl)-L-glutamyl-[protein] + nicotinamide. The enzyme catalyses L-lysyl-[protein] + NAD(+) = N(6)-(ADP-D-ribosyl)-L-lysyl-[protein] + nicotinamide + H(+). Its function is as follows. Mono-ADP-ribosyltransferase that mediates mono-ADP-ribosylation of target proteins and plays a key role in the response to DNA damage. Mediates mono-ADP-ribosylation of glutamate, aspartate or lysine residues on target proteins. In contrast to PARP1 and PARP2, it is not able to mediate poly-ADP-ribosylation. Involved in DNA repair by mediating mono-ADP-ribosylation of a limited number of acceptor proteins involved in chromatin architecture and in DNA metabolism, such as histone H2B, XRCC5 and XRCC6. ADP-ribosylation follows DNA damage and appears as an obligatory step in a detection/signaling pathway leading to the reparation of DNA strand breaks. Involved in single-strand break repair by catalyzing mono-ADP-ribosylation of histone H2B on 'Glu-2' (H2BE2ADPr) of nucleosomes containing nicked DNA. Cooperates with the XRCC5-XRCC6 (Ku80-Ku70) heterodimer to limit end-resection thereby promoting accurate NHEJ. Associates with a number of DNA repair factors and is involved in the response to exogenous and endogenous DNA strand breaks. Together with APLF, promotes the retention of the LIG4-XRCC4 complex on chromatin and accelerate DNA ligation during non-homologous end-joining (NHEJ). In addition to proteins, also able to ADP-ribosylate DNA: mediates DNA mono-ADP-ribosylation of DNA strand break termini via covalent addition of a single ADP-ribose moiety to a 5'- or 3'-terminal phosphate residues in DNA containing multiple strand breaks. The chain is Protein mono-ADP-ribosyltransferase PARP3 from Gallus gallus (Chicken).